Reading from the N-terminus, the 488-residue chain is Protein nucleotidyltransferase YdiU (488 aa).

ATP is bound by residues G91, G93, R94, K114, D126, G127, R177, and R184. D253 (proton acceptor) is an active-site residue. The Mg(2+) site is built by N254 and D263. D263 contacts ATP.

Belongs to the SELO family. Mg(2+) is required as a cofactor. Mn(2+) serves as cofactor.

The enzyme catalyses L-seryl-[protein] + ATP = 3-O-(5'-adenylyl)-L-seryl-[protein] + diphosphate. It catalyses the reaction L-threonyl-[protein] + ATP = 3-O-(5'-adenylyl)-L-threonyl-[protein] + diphosphate. The catalysed reaction is L-tyrosyl-[protein] + ATP = O-(5'-adenylyl)-L-tyrosyl-[protein] + diphosphate. It carries out the reaction L-histidyl-[protein] + UTP = N(tele)-(5'-uridylyl)-L-histidyl-[protein] + diphosphate. The enzyme catalyses L-seryl-[protein] + UTP = O-(5'-uridylyl)-L-seryl-[protein] + diphosphate. It catalyses the reaction L-tyrosyl-[protein] + UTP = O-(5'-uridylyl)-L-tyrosyl-[protein] + diphosphate. Functionally, nucleotidyltransferase involved in the post-translational modification of proteins. It can catalyze the addition of adenosine monophosphate (AMP) or uridine monophosphate (UMP) to a protein, resulting in modifications known as AMPylation and UMPylation. The sequence is that of Protein nucleotidyltransferase YdiU from Bacillus cereus (strain G9842).